We begin with the raw amino-acid sequence, 587 residues long: Phosphatidylinositol-3-phosphatase SAC1 (587 aa).

The Cytoplasmic segment spans residues 1–520; that stretch reads MAATAYEHLK…SPLSVPRDWK (520 aa). An SAC domain is found at 122 to 451; the sequence is LNHVLSTDGF…ANACAKQYAG (330 aa). The tract at residues 452-587 is essential for phosphatidylinositol-4-phosphate phosphatase activity; it reads TGALKTDFTR…PRLVQKEKID (136 aa). The residue at position 456 (Lys-456) is an N6-acetyllysine. A helical membrane pass occupies residues 521–541; the sequence is FLALPIIMVVAFSMCIICLLM. Over 542–548 the chain is Lumenal; sequence AGDTWTE. Residues 549–569 form a helical membrane-spanning segment; sequence TLAYVLFWGVASIGTFFIILY. At 570-587 the chain is on the cytoplasmic side; it reads NGKDFVDAPRLVQKEKID.

Interacts with TMEM39A. Interacts with SEC23A and SEC24A; this interaction is reduced in the absence of TMEM39A. Interacts with PLEKHA3 and VAPA and/or VAPB to form a ternary complex. In terms of tissue distribution, detected in spleen, lung, liver, skeletal muscle, kidney, testis and in cerebellar Purkinje cells (at protein level). Ubiquitous. Highly expressed in brain, spleen, liver and kidney.

The protein resides in the endoplasmic reticulum membrane. It is found in the golgi apparatus membrane. It catalyses the reaction a 1,2-diacyl-sn-glycero-3-phospho-(1D-myo-inositol-3-phosphate) + H2O = a 1,2-diacyl-sn-glycero-3-phospho-(1D-myo-inositol) + phosphate. It carries out the reaction a 1,2-diacyl-sn-glycero-3-phospho-(1D-myo-inositol 4-phosphate) + H2O = a 1,2-diacyl-sn-glycero-3-phospho-(1D-myo-inositol) + phosphate. In terms of biological role, phosphoinositide phosphatase which catalyzes the hydrolysis of phosphatidylinositol 4-phosphate (PtdIns(4)P), phosphatidylinositol 3-phosphate (PtdIns(3)P) and has low activity towards phosphatidylinositol-3,5-bisphosphate (PtdIns(3,5)P2). Shows a very robust PtdIns(4)P phosphatase activity when it binds PtdIns(4)P in a 'cis' configuration in the cellular environment, with much less activity seen when it binds PtdIns(4)P in 'trans' configuration. PtdIns(4)P phosphatase activity (when it binds PtdIns(4)P in 'trans' configuration) is enhanced in the presence of PLEKHA3. The chain is Phosphatidylinositol-3-phosphatase SAC1 (Sacm1l) from Rattus norvegicus (Rat).